The chain runs to 178 residues: CASP-like protein 2A2 (178 aa).

Topologically, residues 1-22 are cytoplasmic; sequence MDKTDQTAIDGSALELNRTEKT. A helical membrane pass occupies residues 23 to 43; sequence VEAVLRVASMALSITGLVIMI. The Extracellular segment spans residues 44–69; that stretch reads KNSISNDFGSLSYSNLGAFMYLVGAN. Residues 70 to 90 form a helical membrane-spanning segment; sequence GVCAAYSLLSALAILALPCPI. Over 91–96 the chain is Cytoplasmic; sequence SKVQVR. A helical transmembrane segment spans residues 97 to 117; the sequence is TLFLLDQVVTYVVLAAGAVSA. Residues 118–145 lie on the Extracellular side of the membrane; it reads ETVYLAYYGNIPITWSSACDSYGIFCHK. Residues 146 to 166 form a helical membrane-spanning segment; it reads ALISVVFTFVVSLLYMLLSLI. Residues 167-178 lie on the Cytoplasmic side of the membrane; sequence SSYRLFSRFEAP.

The protein belongs to the Casparian strip membrane proteins (CASP) family. Homodimer and heterodimers.

It is found in the cell membrane. In Arabidopsis lyrata subsp. lyrata (Lyre-leaved rock-cress), this protein is CASP-like protein 2A2.